Here is a 317-residue protein sequence, read N- to C-terminus: UAP56-interacting factor (317 aa).

M1 is modified (N-acetylmethionine). The disordered stretch occupies residues 1 to 23 (MNRFGTRLVGATATTPPAPKARS). Residue T14 is modified to Phosphothreonine. The residue at position 23 (S23) is a Phosphoserine. Residues 26–44 (NLDKIDMSLDEIIKLNRKE) carry the UAP56-binding motif motif. S60 and S117 each carry phosphoserine. Residue K139 forms a Glycyl lysine isopeptide (Lys-Gly) (interchain with G-Cter in SUMO1) linkage. Residue K260 forms a Glycyl lysine isopeptide (Lys-Gly) (interchain with G-Cter in SUMO2) linkage.

This sequence belongs to the UIF family. In terms of assembly, interacts with DDX39B/UAP56 and NXF1; interaction with DDX39B/UAP56 and NXF1 are mutually exclusive. Interacts with SSRP1; required for its recruitment to mRNAs. Interacts with CHTOP.

It localises to the nucleus. The protein resides in the nucleoplasm. The protein localises to the nucleus speckle. Its function is as follows. Required for mRNA export from the nucleus to the cytoplasm. Acts as an adapter that uses the DDX39B/UAP56-NFX1 pathway to ensure efficient mRNA export and delivering to the nuclear pore. Associates with spliced and unspliced mRNAs simultaneously with ALYREF/THOC4. The polypeptide is UAP56-interacting factor (Fyttd1) (Rattus norvegicus (Rat)).